The sequence spans 335 residues: Zinc finger protein 396 (335 aa).

Residues 52 to 134 (RQQFRQFGYQ…TMLEDVEREL (83 aa)) enclose the SCAN box domain. C2H2-type zinc fingers lie at residues 251 to 273 (QKCD…QRIH), 279 to 301 (YACD…RRTH), and 307 to 329 (YKCH…RKRH).

Belongs to the krueppel C2H2-type zinc-finger protein family. As to quaternary structure, isoforms 1 and 2 can both homo- and hetero-associate. As to expression, expressed strongly in liver, moderately in skeletal muscle and weakly in kidney, pancreas, spleen and prostate.

The protein localises to the nucleus. It localises to the cytoplasm. Isoform 1 and isoform 2 act as DNA-dependent transcriptional repressors. This chain is Zinc finger protein 396 (ZNF396), found in Homo sapiens (Human).